The sequence spans 328 residues: Phosphate acyltransferase (328 aa).

Belongs to the PlsX family. As to quaternary structure, homodimer. Probably interacts with PlsY.

It localises to the cytoplasm. The enzyme catalyses a fatty acyl-[ACP] + phosphate = an acyl phosphate + holo-[ACP]. It functions in the pathway lipid metabolism; phospholipid metabolism. Catalyzes the reversible formation of acyl-phosphate (acyl-PO(4)) from acyl-[acyl-carrier-protein] (acyl-ACP). This enzyme utilizes acyl-ACP as fatty acyl donor, but not acyl-CoA. The chain is Phosphate acyltransferase from Campylobacter jejuni subsp. jejuni serotype O:2 (strain ATCC 700819 / NCTC 11168).